A 396-amino-acid polypeptide reads, in one-letter code: Succinyl-CoA:mesaconate CoA-transferase (396 aa).

D175 serves as the catalytic Nucleophile.

Belongs to the CoA-transferase III family.

The enzyme catalyses mesaconate + succinyl-CoA = 2-methylfumaryl-CoA + succinate. Involved in the methylaspartate cycle. Catalyzes the transfer of the CoA moiety from succinyl-CoA to mesaconate to generate mesaconyl-CoA (2-methylfumaryl-CoA) and succinate. The polypeptide is Succinyl-CoA:mesaconate CoA-transferase (Haloarcula marismortui (strain ATCC 43049 / DSM 3752 / JCM 8966 / VKM B-1809) (Halobacterium marismortui)).